A 131-amino-acid polypeptide reads, in one-letter code: Small ribosomal subunit protein uS8 (131 aa).

It belongs to the universal ribosomal protein uS8 family. Part of the 30S ribosomal subunit. Contacts proteins S5 and S12.

In terms of biological role, one of the primary rRNA binding proteins, it binds directly to 16S rRNA central domain where it helps coordinate assembly of the platform of the 30S subunit. In Acidithiobacillus ferrooxidans (strain ATCC 23270 / DSM 14882 / CIP 104768 / NCIMB 8455) (Ferrobacillus ferrooxidans (strain ATCC 23270)), this protein is Small ribosomal subunit protein uS8.